Reading from the N-terminus, the 610-residue chain is Elongation factor 4 (610 aa).

One can recognise a tr-type G domain in the interval 11–193; that stretch reads EKIRNFSIIA…QIVEKVPAPT (183 aa). Residues 23–28 and 140–143 each bind GTP; these read DHGKST and NKID.

This sequence belongs to the TRAFAC class translation factor GTPase superfamily. Classic translation factor GTPase family. LepA subfamily.

The protein resides in the cell membrane. The catalysed reaction is GTP + H2O = GDP + phosphate + H(+). In terms of biological role, required for accurate and efficient protein synthesis under certain stress conditions. May act as a fidelity factor of the translation reaction, by catalyzing a one-codon backward translocation of tRNAs on improperly translocated ribosomes. Back-translocation proceeds from a post-translocation (POST) complex to a pre-translocation (PRE) complex, thus giving elongation factor G a second chance to translocate the tRNAs correctly. Binds to ribosomes in a GTP-dependent manner. The protein is Elongation factor 4 of Streptococcus agalactiae serotype Ia (strain ATCC 27591 / A909 / CDC SS700).